A 440-amino-acid polypeptide reads, in one-letter code: Indoleamine 2,3-dioxygenase qulI (440 aa).

Residue histidine 347 coordinates heme.

It belongs to the indoleamine 2,3-dioxygenase family. Monomer. Requires heme as cofactor.

It catalyses the reaction D-tryptophan + O2 = N-formyl-D-kynurenine. It carries out the reaction L-tryptophan + O2 = N-formyl-L-kynurenine. It participates in secondary metabolite biosynthesis. Functionally, indoleamine 2,3-dioxygenase; part of the gene cluster that mediates the biosynthesis of quinolactacin A2 (QUL A2), a fungal alkaloid that features a quinolone-gamma-lactam hybrid, which is a potential pharmacophore for the treatment of cancer and Alzheimer's disease. The quinolone-gamma-lactam hybrid scaffold is synthesized from the combination of L-isoleucine (L-Ile) and the nonproteinogenic amino acid L-kynurenine, followed by quinolone cyclization, oxidative decarboxylation, and lactam formation. Additionally, the N-methyl group is derived from methionine, which might be catalyzed by an S-adenosylmethionine (SAM)-dependent methyltransferase. Bioconversion of L-tryptophan to L-kynurenine could be catalyzed by the indoleamine-2,3-dioxygenase (IDO) qulI to produce an unstable product, N-formyl-L-kynurenine, followed by kynurenine formamidase catalyzed hydrolysis. QulM then acts as a methyltransferase that methylates L-kynurenine at the N-4 position. The FMN-dependent alpha-hydroxy acid dehydrogenase qulF than functions as an oxidative decarboxylase which converts N-methylkynurenine into 2-aminobenzoylacetamide via 2 tandem reactions, including dehydrogenation and decarboxylation. An amidase located outside of the qul gene cluster further produces the unstable beta-keto acid precursor N-methyl-2-aminobenzoylacetate, which could be spontaneously dehydrated to form N-methyl-4-hydroxy-2-quinolone. The NRPS qulB is able to incorporate N-methyl-2-aminobenzoylacetate and efficiently compete with the spontaneous reaction. By further extending the beta-keto acid with L-Ile, qulA performs a Dieckmann condensation to form the gamma-lactam ring and release a 4-ketopyrrolidinone intermediate from the assembly line. This intermediate could plausibly further undergo a spontaneous cyclization to yield the final quinolone-gamma-lactam hybrid structure. The protein is Indoleamine 2,3-dioxygenase qulI of Penicillium citrinum.